The following is a 238-amino-acid chain: Cysteine-rich venom protein pseudechetoxin-like (238 aa).

A signal peptide spans 1-19 (MIAFIVLLSLAAVLQQSSG). Positions 20–28 (TVDFASESS) are excised as a propeptide. The region spanning 38–164 (VDKHNALRRS…STKYLYVCQY (127 aa)) is the SCP domain. 8 disulfides stabilise this stretch: C75–C153, C92–C165, C148–C162, C184–C191, C187–C196, C200–C233, C209–C227, and C218–C231. Residues 200–233 (CKYEDDFSNCKALAKNSKCQTEWIKSKCPAACFC) enclose the ShKT domain.

Belongs to the CRISP family. Expressed by the venom gland.

The protein localises to the secreted. Functionally, blocks olfactory (CNGA2) and retinal (CNGA1) CNG channel currents. Does not affect neither depolarization- nor caffeine-induced contraction of smooth muscle. In Notechis scutatus scutatus (Mainland tiger snake), this protein is Cysteine-rich venom protein pseudechetoxin-like.